The chain runs to 39 residues: Larval cuticle protein SC6 (39 aa).

Positions 15–39 constitute a Chitin-binding type R&amp;R domain; sequence VDQFKYGLELDNSIKADQEGHLEGD.

Component of the cuticle of the larva of flesh fly. The chain is Larval cuticle protein SC6 from Sarcophaga bullata (Grey flesh fly).